Reading from the N-terminus, the 645-residue chain is ATP-dependent zinc metalloprotease FtsH (645 aa).

Topologically, residues M1–K8 are cytoplasmic. Residues I9 to S29 form a helical membrane-spanning segment. At Q30–W105 the chain is on the periplasmic side. Residues P106 to I126 form a helical membrane-spanning segment. Topologically, residues R127–Q645 are cytoplasmic. G199–T206 provides a ligand contact to ATP. A Zn(2+)-binding site is contributed by H423. The active site involves E424. Residues H427 and D500 each coordinate Zn(2+). A disordered region spans residues S612–Q645. Residues G627–L637 show a composition bias toward basic and acidic residues.

It in the central section; belongs to the AAA ATPase family. The protein in the C-terminal section; belongs to the peptidase M41 family. Homohexamer. The cofactor is Zn(2+).

It is found in the cell inner membrane. In terms of biological role, acts as a processive, ATP-dependent zinc metallopeptidase for both cytoplasmic and membrane proteins. Plays a role in the quality control of integral membrane proteins. The protein is ATP-dependent zinc metalloprotease FtsH of Paraburkholderia phymatum (strain DSM 17167 / CIP 108236 / LMG 21445 / STM815) (Burkholderia phymatum).